The following is a 396-amino-acid chain: Elongation factor Tu (396 aa).

The tr-type G domain occupies 10–206; the sequence is KPHVNVGTIG…ALDSYIPEPV (197 aa). The G1 stretch occupies residues 19 to 26; it reads GHIDHGKT. 19 to 26 is a GTP binding site; that stretch reads GHIDHGKT. Residue Thr-26 coordinates Mg(2+). The interval 60 to 64 is G2; that stretch reads TKTVT. The segment at 83 to 86 is G3; that stretch reads DCPG. Residues 83-87 and 138-141 each bind GTP; these read DCPGH and NKCD. A G4 region spans residues 138 to 141; that stretch reads NKCD. The interval 176–178 is G5; it reads ASL.

Belongs to the TRAFAC class translation factor GTPase superfamily. Classic translation factor GTPase family. EF-Tu/EF-1A subfamily. Monomer.

Its subcellular location is the cytoplasm. It carries out the reaction GTP + H2O = GDP + phosphate + H(+). GTP hydrolase that promotes the GTP-dependent binding of aminoacyl-tRNA to the A-site of ribosomes during protein biosynthesis. This chain is Elongation factor Tu, found in Sorangium cellulosum (strain So ce56) (Polyangium cellulosum (strain So ce56)).